Consider the following 355-residue polypeptide: Peptide chain release factor 1 (355 aa).

The residue at position 231 (glutamine 231) is an N5-methylglutamine. Basic and acidic residues predominate over residues 283 to 292 (IAKETSERKS). Residues 283–303 (IAKETSERKSQVGTGDRSGRI) are disordered.

The protein belongs to the prokaryotic/mitochondrial release factor family. Methylated by PrmC. Methylation increases the termination efficiency of RF1.

It is found in the cytoplasm. Peptide chain release factor 1 directs the termination of translation in response to the peptide chain termination codons UAG and UAA. This chain is Peptide chain release factor 1, found in Campylobacter curvus (strain 525.92).